The following is a 320-amino-acid chain: Transcription termination/antitermination protein NusG (320 aa).

This sequence belongs to the NusG family.

Participates in transcription elongation, termination and antitermination. The chain is Transcription termination/antitermination protein NusG from Mycoplasma pneumoniae (strain ATCC 29342 / M129 / Subtype 1) (Mycoplasmoides pneumoniae).